We begin with the raw amino-acid sequence, 464 residues long: Rhodopsin (464 aa).

At 1 to 33 (MGRDIPDNETWWYNPTMEVHPHWKQFNQVPDAV) the chain is on the extracellular side. An N-linked (GlcNAc...) asparagine glycan is attached at N8. A helical membrane pass occupies residues 34 to 58 (YYSLGIFIGICGIIGCTGNGIVIYL). At 59 to 70 (FTKTKSLQTPAN) the chain is on the cytoplasmic side. The chain crosses the membrane as a helical span at residues 71–97 (MFIINLAFSDFTFSLVNGFPLMTISCF). Residues 98–109 (IKKWVFGMAACK) are Extracellular-facing. A disulfide bridge links C108 with C186. Residues 110-131 (VYGFIGGIFGLMSIMTMSMISI) form a helical membrane-spanning segment. The 'Ionic lock' involved in activated form stabilization signature appears at 132-134 (DRY). Over 132 to 151 (DRYNVIGRPMAASKKMSHRR) the chain is Cytoplasmic. The helical transmembrane segment at 152-172 (AFLMIIFVWMWSTLWSIGPIF) threads the bilayer. Over 173 to 199 (GWGAYVLEGVLCNCSFDYITRDSATRS) the chain is Extracellular. The helical transmembrane segment at 200 to 224 (NIVCMYIFAFCFPILIIFFCYFNIV) threads the bilayer. Residues 225 to 261 (MAVSNHEKEMAAMAKRLNAKELRKAQAGASAEMKLAK) are Cytoplasmic-facing. Residues 262–283 (ISIVIVTQFLLSWSPYAVVALL) traverse the membrane as a helical segment. Residues 284-293 (AQFGPIEWVT) are Extracellular-facing. The chain crosses the membrane as a helical span at residues 294–315 (PYAAQLPVMFAKASAIHNPLIY). The residue at position 305 (K305) is an N6-(retinylidene)lysine. Residues 316–464 (SVSHPKFREA…QGVDNQAYQA (149 aa)) lie on the Cytoplasmic side of the membrane. Residues C336 and C337 are each lipidated (S-palmitoyl cysteine). A disordered region spans residues 344-464 (VEDDKDAETE…QGVDNQAYQA (121 aa)). Low complexity predominate over residues 367–401 (AAQMKEMMAMMQKMQQQQAAYPPQGAYPPQGGYPP). Composition is skewed to pro residues over residues 416–425 (QGYPPPPQGY) and 434–452 (QGYPPPQGAPPQGAPPQAA).

Belongs to the G-protein coupled receptor 1 family. Opsin subfamily. In terms of processing, contains one covalently linked retinal chromophore. Upon light absorption, the covalently bound 11-cis-retinal is converted to all-trans-retinal. After hydrolysis of the Schiff base and release of the covalently bound all-trans-retinal, active rhodopsin is regenerated by binding of a fresh molecule of 11-cis-retinal.

The protein localises to the cell projection. It is found in the rhabdomere membrane. In terms of biological role, photoreceptor required for image-forming vision at low light intensity. Light-induced isomerization of 11-cis to all-trans retinal triggers a conformational change that activates signaling via G-proteins. Signaling mediates the activation of phospholipase C. Subsequent receptor phosphorylation mediates displacement of the bound G-protein alpha subunit by arrestin and terminates signaling. The polypeptide is Rhodopsin (RHO) (Sepia officinalis (Common cuttlefish)).